The following is a 308-amino-acid chain: Ornithine carbamoyltransferase (308 aa).

Carbamoyl phosphate is bound by residues 55–58 (STRT), Gln-82, Arg-106, and 133–136 (HPCQ). L-ornithine contacts are provided by residues Asn-164, Asp-227, and 231–232 (SM). Residues 267–268 (CL) and Arg-295 contribute to the carbamoyl phosphate site.

It belongs to the aspartate/ornithine carbamoyltransferase superfamily. OTCase family.

It is found in the cytoplasm. The enzyme catalyses carbamoyl phosphate + L-ornithine = L-citrulline + phosphate + H(+). It participates in amino-acid biosynthesis; L-arginine biosynthesis; L-arginine from L-ornithine and carbamoyl phosphate: step 1/3. Reversibly catalyzes the transfer of the carbamoyl group from carbamoyl phosphate (CP) to the N(epsilon) atom of ornithine (ORN) to produce L-citrulline. This is Ornithine carbamoyltransferase from Prochlorococcus marinus subsp. pastoris (strain CCMP1986 / NIES-2087 / MED4).